We begin with the raw amino-acid sequence, 85 residues long: Cloacin immunity protein (85 aa).

Lys12 is modified (N6-methyllysine).

It belongs to the cloacin immunity protein family.

In terms of biological role, this protein complexes with cloacin protein in equimolar amounts and inhibits it by binding with high affinity to the C-terminal catalytic domain of cloacin. The polypeptide is Cloacin immunity protein (cim) (Escherichia coli).